The chain runs to 122 residues: Large ribosomal subunit protein uL14 (122 aa).

Belongs to the universal ribosomal protein uL14 family. In terms of assembly, part of the 50S ribosomal subunit. Forms a cluster with proteins L3 and L19. In the 70S ribosome, L14 and L19 interact and together make contacts with the 16S rRNA in bridges B5 and B8.

Functionally, binds to 23S rRNA. Forms part of two intersubunit bridges in the 70S ribosome. This Chelativorans sp. (strain BNC1) protein is Large ribosomal subunit protein uL14.